A 447-amino-acid polypeptide reads, in one-letter code: UDP-N-acetylmuramate--L-alanine ligase (447 aa).

Residue Gly-108–Ser-114 participates in ATP binding.

Belongs to the MurCDEF family.

Its subcellular location is the cytoplasm. It catalyses the reaction UDP-N-acetyl-alpha-D-muramate + L-alanine + ATP = UDP-N-acetyl-alpha-D-muramoyl-L-alanine + ADP + phosphate + H(+). It participates in cell wall biogenesis; peptidoglycan biosynthesis. Cell wall formation. The sequence is that of UDP-N-acetylmuramate--L-alanine ligase from Listeria welshimeri serovar 6b (strain ATCC 35897 / DSM 20650 / CCUG 15529 / CIP 8149 / NCTC 11857 / SLCC 5334 / V8).